The sequence spans 320 residues: 1-aminocyclopropane-1-carboxylate oxidase 3 (320 aa).

The Fe2OG dioxygenase domain maps to 153 to 253 (PNFGTKVSNY…RMSLASFYNP (101 aa)). Residues His177, Asp179, and His234 each coordinate Fe cation.

Belongs to the iron/ascorbate-dependent oxidoreductase family. Requires Fe cation as cofactor.

The enzyme catalyses 1-aminocyclopropane-1-carboxylate + L-ascorbate + O2 = ethene + L-dehydroascorbate + hydrogen cyanide + CO2 + 2 H2O. The protein operates within alkene biosynthesis; ethylene biosynthesis via S-adenosyl-L-methionine; ethylene from S-adenosyl-L-methionine: step 2/2. This chain is 1-aminocyclopropane-1-carboxylate oxidase 3 (ACO3), found in Petunia hybrida (Petunia).